A 406-amino-acid chain; its full sequence is uncharacterized protein (406 aa).

Transmembrane regions (helical) follow at residues 7 to 27 (LCTN…YYLF), 31 to 51 (YFNI…YGSV), 65 to 85 (LIFI…SEII), 92 to 112 (IFYF…SFIL), and 191 to 211 (ISLI…SSFF). The interval 259-331 (TLNVPISTNN…TGTNNNVVDN (73 aa)) is disordered. The segment covering 262–291 (VPISTNNTDNLNSVKTNQQFNTPVAKSNTK) has biased composition (polar residues). Residues 292–303 (SNRRKKTGKKIR) show a composition bias toward basic residues. Low complexity predominate over residues 306-318 (NQTTSSNSSNNQS). The segment covering 319–330 (PESTGTNNNVVD) has biased composition (polar residues).

The protein resides in the membrane. This is an uncharacterized protein from Acanthamoeba polyphaga (Amoeba).